Here is a 553-residue protein sequence, read N- to C-terminus: Putative transport protein Ent638_0015 (553 aa).

Transmembrane regions (helical) follow at residues 4-24 (IALT…IGNI), 28-48 (GVGL…HFAE), 65-85 (FGLI…FFAS), 95-115 (LFAL…HKLF), and 158-178 (MSYA…MWLV). RCK C-terminal domains lie at 191-276 (KKHE…VIGQ) and 279-361 (ETSL…MVGN). Transmembrane regions (helical) follow at residues 371-391 (MLPV…PLYV), 403-425 (AGGP…LYWF), 439-459 (IVLF…DTLA), 464-484 (ISWI…IGIL), 493-513 (YLTL…LAFA), and 533-553 (LVMF…WGMG).

This sequence belongs to the AAE transporter (TC 2.A.81) family. YidE subfamily.

It is found in the cell membrane. The chain is Putative transport protein Ent638_0015 from Enterobacter sp. (strain 638).